The chain runs to 96 residues: Probable quinol oxidase subunit 4 (96 aa).

A run of 3 helical transmembrane segments spans residues 8-28 (TVGF…TLYT), 37-57 (TIIF…FMHL), and 68-88 (FKVI…YWVM).

It belongs to the cytochrome c oxidase bacterial subunit 4 family.

It localises to the cell membrane. It catalyses the reaction 2 a quinol + O2 = 2 a quinone + 2 H2O. Functionally, catalyzes quinol oxidation with the concomitant reduction of oxygen to water. The protein is Probable quinol oxidase subunit 4 (qoxD) of Staphylococcus haemolyticus (strain JCSC1435).